The primary structure comprises 696 residues: MSFSNVLIMRQPDEGKCHICKRVFCCGKCRQKHQFKAHAIAVREPLGLRSAGGGIIEHRHQMESGATTIYVFCPICERRPLLLREEMHGELLAHIETCHLPLRCRKCQRNYTRVDDLREFSKCVDQQQSCTDVTGATETSKATLKKAANSTAISTQTSPSVTPISLINMRWKAKSRVTHEEFISDSVSSIRNLSSFSNSSIRRSIGQLGVNPSETMEKGKVIRSTSTPLHVESVFAKPKEPITFNASTGGHVSSIYHEEPSPTPESNPVQQQQQQQQPLQQRAWKMGARNKMSAATPLRQVMSKSIQKAFVEHGGMMVHQPPSAVVQRRVRLDLSEHSSHEAAGSSALDLRLSPAMRRTQSESSASEVNSGSSSSYSTSRNADLCKRQFLLSAQKLTTESIIITRTNSSSQKTSSTVYNSCESVEIIRSTSESAEVCHVPAITPIRVTGAGINKKQIKFETPPKSSQQMRSNGEGDETKDQFFTPEPGTPEIPERRHRQAIVPRQLSGEFSPKKDKPKEKGLAVMALISPPLQQPRVRPPLRECRQQRVYSGVQDVGEPEVVDAEEEDEVFRPTNASTCNDKKLEAPNSGRLWSLMSSMMRLPASLRGEREKDRDRDRDSDKENAGSGSLIRRCASIAGSLVRPSARDSSMEDQQCLKRKRTQTLDSQYCSPLSPSSSSKRYRIRPREPIERMRRQ.

Disordered stretches follow at residues Asn-245–Lys-285, Glu-336–Ser-379, and Ile-457–Ile-492. Low complexity-rich tracts occupy residues Gln-270 to Gln-281 and Ser-361 to Ser-379. The segment at Thr-448 to Gln-696 is rich in charged AA. 3 positions are modified to phosphothreonine: Thr-478, Thr-484, and Thr-489. Short sequence motifs (nuclear localization signal) lie at residues Pro-512 to Lys-520 and Gln-534 to Arg-538. Disordered stretches follow at residues Asp-555–Ala-586 and Pro-603–Gln-696. The segment covering Gly-557–Glu-569 has biased composition (acidic residues). Composition is skewed to basic and acidic residues over residues Arg-607 to Asn-624 and Arg-685 to Gln-696.

The protein localises to the nucleus envelope. It localises to the nucleus. It is found in the nucleoplasm. Its subcellular location is the cytoplasm. Its function is as follows. Cell cycle-dependent nuclear envelope component required for embryonic mitosis. The chain is Mitosis initiation protein fs(1)Ya (fs(1)Ya) from Drosophila melanogaster (Fruit fly).